The following is a 173-amino-acid chain: Crossover junction endodeoxyribonuclease RuvC (173 aa).

Active-site residues include aspartate 8, glutamate 69, and aspartate 141. Residues aspartate 8, glutamate 69, and aspartate 141 each contribute to the Mg(2+) site.

Belongs to the RuvC family. Homodimer which binds Holliday junction (HJ) DNA. The HJ becomes 2-fold symmetrical on binding to RuvC with unstacked arms; it has a different conformation from HJ DNA in complex with RuvA. In the full resolvosome a probable DNA-RuvA(4)-RuvB(12)-RuvC(2) complex forms which resolves the HJ. The cofactor is Mg(2+).

Its subcellular location is the cytoplasm. It catalyses the reaction Endonucleolytic cleavage at a junction such as a reciprocal single-stranded crossover between two homologous DNA duplexes (Holliday junction).. Its function is as follows. The RuvA-RuvB-RuvC complex processes Holliday junction (HJ) DNA during genetic recombination and DNA repair. Endonuclease that resolves HJ intermediates. Cleaves cruciform DNA by making single-stranded nicks across the HJ at symmetrical positions within the homologous arms, yielding a 5'-phosphate and a 3'-hydroxyl group; requires a central core of homology in the junction. The consensus cleavage sequence is 5'-(A/T)TT(C/G)-3'. Cleavage occurs on the 3'-side of the TT dinucleotide at the point of strand exchange. HJ branch migration catalyzed by RuvA-RuvB allows RuvC to scan DNA until it finds its consensus sequence, where it cleaves and resolves the cruciform DNA. This Xylella fastidiosa (strain Temecula1 / ATCC 700964) protein is Crossover junction endodeoxyribonuclease RuvC.